Here is a 246-residue protein sequence, read N- to C-terminus: MEEQDFTAGIFLIDKPVGITSFGVVSRVRRILGMKKVGHAGTLDPFATGLLVVCAGRPATKMISSFMDGEKEYIATLCLGVETETQDPEGAEIARKQVGFLHAETIETCLAGFKGTQMQVPPAYSALKHQGKPLYYYARKGIEVKKDAREITVHEIERLGEGDLEGDHPSLVIRVRCSKGSYIRTLGSDIGKVLGCGAHLTDLRRTKSGFFNVEDALTDVDMLAEDAHERFMKKVLSVESVGKLLQ.

D44 acts as the Nucleophile in catalysis.

Belongs to the pseudouridine synthase TruB family. Type 1 subfamily.

The enzyme catalyses uridine(55) in tRNA = pseudouridine(55) in tRNA. Its function is as follows. Responsible for synthesis of pseudouridine from uracil-55 in the psi GC loop of transfer RNAs. The protein is tRNA pseudouridine synthase B of Desulfotalea psychrophila (strain LSv54 / DSM 12343).